The following is a 425-amino-acid chain: MDRNKEIFEESKKYMPGGVNSPVRSFGSVGINPPVIKSGKGAMIKDENGNEYIDFVLAWGPMILGHCDEDVVKAIKKTSEESIAFGASTKLELDLAKLLCETLDNVDMIRMVNSGTEATMSAVKLARGYTKKDKIIKFAGCYHGHFDGFLIEAGSGVLTEGIPGCLGVPEESIKNTLIGIYNDEKQVEELFEKYGNDIAGIIIEPVAGNMGVVKCDPKFMRKLRELCDKYGALLIFDEVMCGFRVAYKGAQTLFDVKPDLVTYAKIMGGGLPCGAYGGRREIMENLSPLGGVYQAGTMSGNPIVMSAGLATVKKLYENPSYYDHIEKIGSKLEKGVLEIAKKKGLGLVVNRQGGMMTLFFTDLKEVKCYDDVKTCDGERFKRYFLHMLNKGFNIPPSQFEAMFLSVKHTEEHIDKFLEAFESFEG.

Lys-265 bears the N6-(pyridoxal phosphate)lysine mark.

This sequence belongs to the class-III pyridoxal-phosphate-dependent aminotransferase family. HemL subfamily. As to quaternary structure, homodimer. Pyridoxal 5'-phosphate is required as a cofactor.

The protein localises to the cytoplasm. It carries out the reaction (S)-4-amino-5-oxopentanoate = 5-aminolevulinate. The protein operates within porphyrin-containing compound metabolism; protoporphyrin-IX biosynthesis; 5-aminolevulinate from L-glutamyl-tRNA(Glu): step 2/2. In Clostridium perfringens (strain ATCC 13124 / DSM 756 / JCM 1290 / NCIMB 6125 / NCTC 8237 / Type A), this protein is Glutamate-1-semialdehyde 2,1-aminomutase.